Consider the following 419-residue polypeptide: Glutamyl-tRNA reductase (419 aa).

Substrate-binding positions include 49–52 (TCNR), Ser-107, 112–114 (EPQ), and Gln-118. The active-site Nucleophile is the Cys-50. An NADP(+)-binding site is contributed by 187 to 192 (GAGETI).

Belongs to the glutamyl-tRNA reductase family. As to quaternary structure, homodimer.

It carries out the reaction (S)-4-amino-5-oxopentanoate + tRNA(Glu) + NADP(+) = L-glutamyl-tRNA(Glu) + NADPH + H(+). The protein operates within porphyrin-containing compound metabolism; protoporphyrin-IX biosynthesis; 5-aminolevulinate from L-glutamyl-tRNA(Glu): step 1/2. Its function is as follows. Catalyzes the NADPH-dependent reduction of glutamyl-tRNA(Glu) to glutamate 1-semialdehyde (GSA). The chain is Glutamyl-tRNA reductase from Vibrio cholerae serotype O1 (strain ATCC 39541 / Classical Ogawa 395 / O395).